We begin with the raw amino-acid sequence, 66 residues long: FMRFamide-like neuropeptides 24 (66 aa).

The first 22 residues, 1–22 (MSRTSIILVLAIFVAIAAIAQC), serve as a signal peptide directing secretion. Residues 23–48 (RNIQYDVDEISPEAAFRYAQWGEIPH) constitute a propeptide that is removed on maturation. Phe-61 carries the phenylalanine amide modification. Residues 65-66 (SV) constitute a propeptide that is removed on maturation.

It belongs to the FARP (FMRFamide related peptide) family.

The protein localises to the secreted. In terms of biological role, FMRFamides and FMRFamide-like peptides are neuropeptides. This chain is FMRFamide-like neuropeptides 24, found in Caenorhabditis briggsae.